The primary structure comprises 218 residues: MAEITAKLVKELRDKTSAGMMDCKKALIENKGDMDKSIEWLRQKGIASAEKKSGRVAAEGAVGSYIHTGSRVGVLLELNCETDFVARGDLFQGLLRDLSMQVAACPSVEYVSVDQIPESIANKEKEIEMGRDDLSGKPDQIKAKIVEGRIGKRLKEMALLEQPFIKDSSINVEELVKQVAGKIGENIRVRRFTRYILGEGIEVQGPDFAEEVASMTLG.

The interval 82 to 85 is involved in Mg(2+) ion dislocation from EF-Tu; it reads TDFV.

This sequence belongs to the EF-Ts family.

Its subcellular location is the cytoplasm. In terms of biological role, associates with the EF-Tu.GDP complex and induces the exchange of GDP to GTP. It remains bound to the aminoacyl-tRNA.EF-Tu.GTP complex up to the GTP hydrolysis stage on the ribosome. The sequence is that of Elongation factor Ts from Prochlorococcus marinus (strain NATL1A).